We begin with the raw amino-acid sequence, 286 residues long: Protein METABOLIC NETWORK MODULATOR 1 (286 aa).

A compositionally biased stretch (basic and acidic residues) spans 1 to 10; it reads MEKESHEENN. Disordered regions lie at residues 1-60, 123-146, and 181-204; these read MEKE…DDEA, VMHH…GSGV, and GGER…SGAS. A compositionally biased stretch (basic residues) spans 20–29; sequence KRKRGRPRKQ. Residues 30 to 39 are compositionally biased toward basic and acidic residues; sequence LKLESNEHSL. Residues 131-140 are compositionally biased toward basic residues; the sequence is KRGRKSRFRE. Over residues 191-204 the composition is skewed to polar residues; that stretch reads PMQTETGSQASGAS.

In terms of tissue distribution, mailny observed in young seedlings and in emerging leaves.

Functionally, lineage-specific modulator of primary metabolism. Influences flowering time. The protein is Protein METABOLIC NETWORK MODULATOR 1 of Arabidopsis thaliana (Mouse-ear cress).